We begin with the raw amino-acid sequence, 122 residues long: Protein FLORAL ORGAN NUMBER2 (122 aa).

The first 25 residues, methionine 1–glycine 25, serve as a signal peptide directing secretion. The disordered stretch occupies residues glycine 28–proline 122. Residues lysine 54–arginine 63 show a composition bias toward basic residues. A compositionally biased stretch (low complexity) spans arginine 64 to serine 77. A compositionally biased stretch (basic and acidic residues) spans arginine 111–proline 122.

This sequence belongs to the CLV3/ESR signal peptide family.

The protein localises to the secreted. Probable extracellular signal that regulates meristem maintenance. May function as a putative ligand for a receptor complex including FON1. Regulates the size of the floral meristem and the number of floral organs. The chain is Protein FLORAL ORGAN NUMBER2 (FON2) from Oryza sativa subsp. indica (Rice).